A 359-amino-acid polypeptide reads, in one-letter code: 4'-phosphopantetheinyl transferase A (359 aa).

The protein belongs to the P-Pant transferase superfamily.

It carries out the reaction apo-[ACP] + CoA = holo-[ACP] + adenosine 3',5'-bisphosphate + H(+). Activity is inhibited bythe antifunfal copmpounds PD 404,182, 6-nitroso-1,2-benzopyrone, and calmidazolium chloride with IC(50) values of 3.9 uM, 35.2 uM, and 19.2 uM, respectively. Acyl-carrier-protein synthase that transfers the 4'-phosphopantetheine moiety from coenzyme A to a Ser of an acyl-carrier-protein. The 4'-phosphopantetheine (4'-PPT) portion of CoA provides the essential prosthetic group for a number of carrier proteins and multi-domain enzymes, priming them for the acceptance of acyl building blocks in fatty acid synthesis and many aspects of secondary metabolism mediated by polyketide synthases (PKSs) and non-ribosomal peptide synthetases (NRPSs). PptA is able to transfer the cofactor to a broad range of enzymes with acyl- or peptidyl-carrier protein domains and activates target enzymes involved in the synthesis of lysine, but also secondary metabolites including gliotoxin, fumigaclavine C, fumiquinazole A, fumiquinazoline C, pyripyroprene A, fumagillin, the siderophores triacetylfusarinine C (TAFC) and ferricrocin (FC), and dihydroxy naphthalene (DHN)-melanin. Plays an essential role in virulence. The sequence is that of 4'-phosphopantetheinyl transferase A from Aspergillus fumigatus (strain ATCC MYA-4609 / CBS 101355 / FGSC A1100 / Af293) (Neosartorya fumigata).